A 470-amino-acid polypeptide reads, in one-letter code: Na(+)/H(+) antiporter NhaA 2 (470 aa).

A run of 11 helical transmembrane segments spans residues 34–54 (FLHI…IALL), 85–105 (LEWV…GMEI), 121–141 (ALPA…YLLL), 150–170 (GWGV…TLLG), 179–199 (VLLL…IAVF), 202–222 (SGVA…VFAM), 241–261 (WAGV…IGLI), 317–337 (SLIA…FALA), 357–377 (LATA…ACWL), 395–415 (LLVL…IAQL), and 423–443 (LAAG…VALV).

The protein belongs to the NhaA Na(+)/H(+) (TC 2.A.33) antiporter family.

It is found in the cell inner membrane. The enzyme catalyses Na(+)(in) + 2 H(+)(out) = Na(+)(out) + 2 H(+)(in). Functionally, na(+)/H(+) antiporter that extrudes sodium in exchange for external protons. The protein is Na(+)/H(+) antiporter NhaA 2 of Myxococcus xanthus (strain DK1622).